Here is a 205-residue protein sequence, read N- to C-terminus: Large ribosomal subunit protein uL4 (205 aa).

Residues Gly43 to Ser96 are disordered. Residues Val51 to Gly71 show a composition bias toward basic residues.

This sequence belongs to the universal ribosomal protein uL4 family. Part of the 50S ribosomal subunit.

One of the primary rRNA binding proteins, this protein initially binds near the 5'-end of the 23S rRNA. It is important during the early stages of 50S assembly. It makes multiple contacts with different domains of the 23S rRNA in the assembled 50S subunit and ribosome. Its function is as follows. Forms part of the polypeptide exit tunnel. The polypeptide is Large ribosomal subunit protein uL4 (Lactobacillus helveticus (strain DPC 4571)).